We begin with the raw amino-acid sequence, 73 residues long: Translation initiation factor IF-1 (73 aa).

Residues 1–73 (MAKKDGAIEV…SRGRIVYRYK (73 aa)) form the S1-like domain.

The protein belongs to the IF-1 family. Component of the 30S ribosomal translation pre-initiation complex which assembles on the 30S ribosome in the order IF-2 and IF-3, IF-1 and N-formylmethionyl-tRNA(fMet); mRNA recruitment can occur at any time during PIC assembly.

Its subcellular location is the cytoplasm. One of the essential components for the initiation of protein synthesis. Stabilizes the binding of IF-2 and IF-3 on the 30S subunit to which N-formylmethionyl-tRNA(fMet) subsequently binds. Helps modulate mRNA selection, yielding the 30S pre-initiation complex (PIC). Upon addition of the 50S ribosomal subunit IF-1, IF-2 and IF-3 are released leaving the mature 70S translation initiation complex. In Mycobacterium avium (strain 104), this protein is Translation initiation factor IF-1.